The primary structure comprises 396 residues: Elongation factor Tu (396 aa).

A tr-type G domain is found at 10–206; that stretch reads KPHCNIGTIG…AVDAYIPQPE (197 aa). The G1 stretch occupies residues 19–26; sequence GHVDHGKT. 19–26 lines the GTP pocket; that stretch reads GHVDHGKT. Position 26 (Thr26) interacts with Mg(2+). The interval 60–64 is G2; sequence GITIS. The segment at 81 to 84 is G3; the sequence is DCPG. Residues 81–85 and 136–139 contribute to the GTP site; these read DCPGH and NKCD. The interval 136–139 is G4; it reads NKCD. The interval 174–176 is G5; that stretch reads SAL.

Belongs to the TRAFAC class translation factor GTPase superfamily. Classic translation factor GTPase family. EF-Tu/EF-1A subfamily. As to quaternary structure, monomer.

Its subcellular location is the cytoplasm. The enzyme catalyses GTP + H2O = GDP + phosphate + H(+). GTP hydrolase that promotes the GTP-dependent binding of aminoacyl-tRNA to the A-site of ribosomes during protein biosynthesis. In Nitrobacter hamburgensis (strain DSM 10229 / NCIMB 13809 / X14), this protein is Elongation factor Tu.